The chain runs to 419 residues: Imidazolonepropionase (419 aa).

The Fe(3+) site is built by histidine 84 and histidine 86. Positions 84 and 86 each coordinate Zn(2+). Positions 93, 156, and 189 each coordinate 4-imidazolone-5-propanoate. Tyrosine 156 is a binding site for N-formimidoyl-L-glutamate. Histidine 254 contributes to the Fe(3+) binding site. Histidine 254 contributes to the Zn(2+) binding site. 4-imidazolone-5-propanoate is bound at residue glutamine 257. Aspartate 329 contacts Fe(3+). Aspartate 329 lines the Zn(2+) pocket. N-formimidoyl-L-glutamate-binding residues include asparagine 331 and glycine 333. A 4-imidazolone-5-propanoate-binding site is contributed by threonine 334.

Belongs to the metallo-dependent hydrolases superfamily. HutI family. Monomer. Forms a tightly packed homodimer in the crystal, but this seems to be an artifact of crystallization. Zn(2+) is required as a cofactor. It depends on Fe(3+) as a cofactor.

The protein resides in the cytoplasm. It catalyses the reaction 4-imidazolone-5-propanoate + H2O = N-formimidoyl-L-glutamate. It functions in the pathway amino-acid degradation; L-histidine degradation into L-glutamate; N-formimidoyl-L-glutamate from L-histidine: step 3/3. In terms of biological role, catalyzes the hydrolytic cleavage of the carbon-nitrogen bond in imidazolone-5-propanoate to yield N-formimidoyl-L-glutamate. It is the third step in the universal histidine degradation pathway. In Agrobacterium fabrum (strain C58 / ATCC 33970) (Agrobacterium tumefaciens (strain C58)), this protein is Imidazolonepropionase.